A 92-amino-acid polypeptide reads, in one-letter code: Protein canopy homolog 1 (92 aa).

It belongs to the canopy family.

The polypeptide is Protein canopy homolog 1 (CNPY1) (Homo sapiens (Human)).